A 193-amino-acid polypeptide reads, in one-letter code: ATP synthase subunit b (193 aa).

The chain crosses the membrane as a helical span at residues 35–55 (IPMMLATFIAFVIVFLLLFFF).

This sequence belongs to the ATPase B chain family. F-type ATPases have 2 components, F(1) - the catalytic core - and F(0) - the membrane proton channel. F(1) has five subunits: alpha(3), beta(3), gamma(1), delta(1), epsilon(1). F(0) has three main subunits: a(1), b(2) and c(10-14). The alpha and beta chains form an alternating ring which encloses part of the gamma chain. F(1) is attached to F(0) by a central stalk formed by the gamma and epsilon chains, while a peripheral stalk is formed by the delta and b chains.

It localises to the cell membrane. Functionally, f(1)F(0) ATP synthase produces ATP from ADP in the presence of a proton or sodium gradient. F-type ATPases consist of two structural domains, F(1) containing the extramembraneous catalytic core and F(0) containing the membrane proton channel, linked together by a central stalk and a peripheral stalk. During catalysis, ATP synthesis in the catalytic domain of F(1) is coupled via a rotary mechanism of the central stalk subunits to proton translocation. In terms of biological role, component of the F(0) channel, it forms part of the peripheral stalk, linking F(1) to F(0). This Mycoplasmopsis synoviae (strain 53) (Mycoplasma synoviae) protein is ATP synthase subunit b.